The sequence spans 145 residues: Large ribosomal subunit protein uL13 (145 aa).

The protein belongs to the universal ribosomal protein uL13 family. Part of the 50S ribosomal subunit.

Its function is as follows. This protein is one of the early assembly proteins of the 50S ribosomal subunit, although it is not seen to bind rRNA by itself. It is important during the early stages of 50S assembly. The chain is Large ribosomal subunit protein uL13 from Staphylococcus aureus (strain Mu3 / ATCC 700698).